The sequence spans 218 residues: UPF0758 protein SAUSA300_1608 (218 aa).

The MPN domain occupies Lys-92–Phe-214. The Zn(2+) site is built by His-163, His-165, and Asp-176. The short motif at His-163–Asp-176 is the JAMM motif element.

It belongs to the UPF0758 family.

The chain is UPF0758 protein SAUSA300_1608 from Staphylococcus aureus (strain USA300).